The primary structure comprises 94 residues: Large ribosomal subunit protein bL25 (94 aa).

The disordered stretch occupies residues 1-20 (MFKFNAEVRQSQGKGASRRL).

The protein belongs to the bacterial ribosomal protein bL25 family. As to quaternary structure, part of the 50S ribosomal subunit; part of the 5S rRNA/L5/L18/L25 subcomplex. Contacts the 5S rRNA. Binds to the 5S rRNA independently of L5 and L18.

Functionally, this is one of the proteins that binds to the 5S RNA in the ribosome where it forms part of the central protuberance. The protein is Large ribosomal subunit protein bL25 of Pasteurella multocida (strain Pm70).